Reading from the N-terminus, the 359-residue chain is N6-succino-2-amino-2'-deoxyadenylate synthase (359 aa).

Serine 23 serves as the catalytic Proton acceptor. ATP is bound by residues serine 23, threonine 24, glycine 25, lysine 26, and glycine 27. Serine 23 contacts dGMP. Serine 23 contacts Mg(2+). Asparagine 49 serves as a coordination point for dGMP. ATP contacts are provided by glycine 51, histidine 52, and threonine 53. Glycine 51 is a Mg(2+) binding site. DGMP contacts are provided by serine 131, threonine 132, and arginine 146. Glutamine 190 contacts ATP. Threonine 205 is a binding site for dGMP. Position 274 (threonine 274) interacts with Mg(2+). 3 residues coordinate L-aspartate: threonine 274, valine 275, and arginine 280. Asparagine 305 and glutamine 308 together coordinate ATP.

This sequence belongs to the Caudovirales PurZ family. It depends on Mg(2+) as a cofactor.

It catalyses the reaction dGMP + L-aspartate + ATP = (2S)-2-amino-2'-deoxyadenylo-succinate + ADP + phosphate + 2 H(+). Its pathway is purine metabolism. Functionally, involved in the synthesis of the atypical nucleotide dZTP (2-amino-2'-deoxyadenosine-5'-triphosphate). Catalyzes the condensation of aspartate with deoxyguanylate into dSMP (N6-succino-2-amino-2'-deoxyadenylate), which undergoes defumarylation and phosphorylation respectively by host PurB and guanylate/nucleoside diphosphate kinases to give dZTP. dZTP is integrated into the viral genome instead of adenine by the viral DNA polymerase. This Z-base probably completely replaces adenosine and forms a triple bond to the opposite T-base. The resulting non-standard viral DNA is called Z-genome. The chemically modified DNA is probably harder for the host bacteria to digest with nucleases or restriction enzymes. This chain is N6-succino-2-amino-2'-deoxyadenylate synthase, found in Cyanophage S-2L (Cyanobacteria phage S-2L).